The sequence spans 477 residues: Erythritol/L-threitol-binding protein (477 aa).

A signal peptide (tat-type signal) is located at residues Met1–Ala38.

This sequence belongs to the bacterial solute-binding protein 1 family. Predicted to be exported by the Tat system. The position of the signal peptide cleavage has not been experimentally proven.

In terms of biological role, part of an ABC transporter complex involved in erythritol/L-threitol import. Binds erythritol and L-threitol. Functions in the transport for the degradation pathways of erythritol and L-threitol, that allow M.smegmatis to grow on these compounds as the sole carbon source. The sequence is that of Erythritol/L-threitol-binding protein from Mycolicibacterium smegmatis (strain ATCC 700084 / mc(2)155) (Mycobacterium smegmatis).